A 304-amino-acid polypeptide reads, in one-letter code: Release factor glutamine methyltransferase (304 aa).

2 residues coordinate S-adenosyl-L-methionine: D144 and N188. A substrate-binding site is contributed by N188 to Y191.

Belongs to the protein N5-glutamine methyltransferase family. PrmC subfamily.

It carries out the reaction L-glutaminyl-[peptide chain release factor] + S-adenosyl-L-methionine = N(5)-methyl-L-glutaminyl-[peptide chain release factor] + S-adenosyl-L-homocysteine + H(+). Its function is as follows. Methylates the class 1 translation termination release factors RF1/PrfA and RF2/PrfB on the glutamine residue of the universally conserved GGQ motif. This is Release factor glutamine methyltransferase from Mycobacterium tuberculosis (strain ATCC 25618 / H37Rv).